The following is a 261-amino-acid chain: Carnitinyl-CoA dehydratase (261 aa).

Glutamate 111 acts as the Nucleophile in catalysis. The Proton acceptor role is filled by glutamate 131.

Belongs to the enoyl-CoA hydratase/isomerase family.

It catalyses the reaction (R)-carnitinyl-CoA = crotonobetainyl-CoA + H2O. It functions in the pathway amine and polyamine metabolism; carnitine metabolism. Its function is as follows. Catalyzes the reversible dehydration of L-carnitinyl-CoA to crotonobetainyl-CoA. This chain is Carnitinyl-CoA dehydratase, found in Escherichia coli O157:H7.